The following is a 153-amino-acid chain: MTMQVQYKILDPRLGKEIEMPHYGTKGSAGLDLRACIENDMIIEPGQTVLIPTGMAIHLDDPGLAAMLLPRSGLGHKHGIVLGNLVGLIDSDYQGPLMVSCWNRSEEAYNVTVGERIAQMVIVPVLQPVFTQVEEFGDATERGEGGFGHTGSH.

Substrate-binding positions include 71-73 (RSG), N84, 88-90 (LID), and M98.

It belongs to the dUTPase family. The cofactor is Mg(2+).

It catalyses the reaction dUTP + H2O = dUMP + diphosphate + H(+). The protein operates within pyrimidine metabolism; dUMP biosynthesis; dUMP from dCTP (dUTP route): step 2/2. Its function is as follows. This enzyme is involved in nucleotide metabolism: it produces dUMP, the immediate precursor of thymidine nucleotides and it decreases the intracellular concentration of dUTP so that uracil cannot be incorporated into DNA. The sequence is that of Deoxyuridine 5'-triphosphate nucleotidohydrolase from Hydrogenovibrio crunogenus (strain DSM 25203 / XCL-2) (Thiomicrospira crunogena).